Here is a 287-residue protein sequence, read N- to C-terminus: uncharacterized protein (287 aa).

Residues 43–50 (GKTGAGKS), 90–93 (DLPG), and 156–159 (DKAE) contribute to the GTP site. In terms of domain architecture, G spans 48-140 (GKSSLCNALF…TDEHFYRQVI (93 aa)).

The protein to E.coli YkfA and YeeP.

This is an uncharacterized protein from Escherichia coli (strain K12).